A 368-amino-acid polypeptide reads, in one-letter code: Cell division protein FtsZ 1 (368 aa).

Residues 52–56 (GGGCN), 139–141 (GTG), Glu-170, Arg-174, and Asp-217 contribute to the GTP site.

It belongs to the FtsZ family. As to quaternary structure, homodimer. Polymerizes to form a dynamic ring structure in a strictly GTP-dependent manner. Interacts directly with several other division proteins.

It is found in the cytoplasm. Its function is as follows. Essential cell division protein that forms a contractile ring structure (Z ring) at the future cell division site. The regulation of the ring assembly controls the timing and the location of cell division. One of the functions of the FtsZ ring is to recruit other cell division proteins to the septum to produce a new cell wall between the dividing cells. Binds GTP and shows GTPase activity. This is Cell division protein FtsZ 1 from Archaeoglobus fulgidus (strain ATCC 49558 / DSM 4304 / JCM 9628 / NBRC 100126 / VC-16).